The primary structure comprises 150 residues: Avidin-related protein 7 (150 aa).

Positions 1 to 24 are cleaved as a signal peptide; that stretch reads MVHATSPLLLLLLLSLALVAPGLS. Positions 26-147 constitute an Avidin-like domain; it reads RKCSLTGEWD…GYNNFTRQRT (122 aa). A disulfide bridge connects residues Cys-28 and Cys-105. 2 residues coordinate biotin: Asn-36 and Ser-40. N-linked (GlcNAc...) asparagine glycans are attached at residues Asn-41 and Asn-54. Residues Tyr-57, Thr-59, and Asp-63 each contribute to the biotin site. Residue Asn-93 is glycosylated (N-linked (GlcNAc...) asparagine). 3 residues coordinate biotin: Ser-95, Ser-99, and Asn-140. Residue Asn-141 is glycosylated (N-linked (GlcNAc...) asparagine).

The protein belongs to the avidin/streptavidin family. Homotetramer. Post-translationally, glycosylated.

The protein resides in the secreted. Forms a strong non-covalent specific complex with biotin. This chain is Avidin-related protein 7 (AVR7), found in Gallus gallus (Chicken).